Reading from the N-terminus, the 152-residue chain is Transcriptional regulator MraZ (152 aa).

SpoVT-AbrB domains follow at residues 5 to 51 (VNSI…PLPE) and 80 to 123 (AAEC…DEVL).

It belongs to the MraZ family. In terms of assembly, forms oligomers.

It localises to the cytoplasm. The protein resides in the nucleoid. The chain is Transcriptional regulator MraZ from Methylococcus capsulatus (strain ATCC 33009 / NCIMB 11132 / Bath).